A 380-amino-acid polypeptide reads, in one-letter code: Chorismate synthase (380 aa).

Residues Arg40 and Arg46 each coordinate NADP(+). FMN is bound by residues 128–130 (RSS), 247–248 (QA), Gly292, 307–311 (KPIPT), and Arg333.

The protein belongs to the chorismate synthase family. As to quaternary structure, homotetramer. FMNH2 is required as a cofactor.

It catalyses the reaction 5-O-(1-carboxyvinyl)-3-phosphoshikimate = chorismate + phosphate. It participates in metabolic intermediate biosynthesis; chorismate biosynthesis; chorismate from D-erythrose 4-phosphate and phosphoenolpyruvate: step 7/7. Catalyzes the anti-1,4-elimination of the C-3 phosphate and the C-6 proR hydrogen from 5-enolpyruvylshikimate-3-phosphate (EPSP) to yield chorismate, which is the branch point compound that serves as the starting substrate for the three terminal pathways of aromatic amino acid biosynthesis. This reaction introduces a second double bond into the aromatic ring system. This is Chorismate synthase from Alkaliphilus metalliredigens (strain QYMF).